The primary structure comprises 1260 residues: Paraclostridial mosquitocidal protein 1 (1260 aa).

His-208 is a Zn(2+) binding site. Glu-209 functions as the Proton acceptor in the catalytic mechanism. Positions 212 and 248 each coordinate Zn(2+). A disulfide bridge links Cys-395 with Cys-406. The translocation domain (TD) stretch occupies residues 401–824 (NRVNICIDVN…NIQSIPDFDI (424 aa)). Residues 825–1065 (NALIDRLGIQ…SYFNSNILRD (241 aa)) are HCN. Positions 1066 to 1260 (FWGEPLEYNK…FVSEDEGWKE (195 aa)) are HCC.

This sequence belongs to the peptidase M27 family. Zn(2+) serves as cofactor.

The catalysed reaction is Limited hydrolysis of proteins of the neuroexocytosis apparatus, synaptobrevins, SNAP25 or syntaxin. No detected action on small molecule substrates.. With respect to regulation, preincubation with the metalloprotease inhibitor 1,10-phenanthroline before injection into Anopheles or Aedes decreases toxicity. In terms of biological role, neurotoxin active against Anopheles but not Aedes mosquitoes upon oral ingestion; expression of the ptox operon (ntnh-orfX1-orfX2-orfX3-pmp1) in B.thuringiensis kills Anopheles but not Aedes mosquito 3rd instar larvae. The ntnh-pmp1 construct is about half as toxic. PMP1 is toxic when injected directly into Anopheles or Aedes mosquito 3rd instar larvae, larvae no longer move, suggesting they are paralyzed. Adult mosquitoes (Anopheles or Aedes) and Drosophila lose the ability to fly in a dose-dependent manner by 24 hours after injection with 100 pg neurotoxin. Not toxic upon injection in mice. Functionally, neurotoxin that cleaves A.gambiae syntaxin 1a, probably hydrolyzing the '240-Glu-|-His-241' bond. Does not cleave A.gambiae n-synaptobrevin or SNAP-25, nor human syntaxin 1A. Its function is as follows. Responsible for host epithelial cell transcytosis, host nerve cell targeting and translocation of PMP1 light chain (LC) into host cytosol. Composed of 3 subdomains; the translocation domain (TD), and N-terminus and C-terminus of the receptor-binding domain (RBD), called HCN and HCC. The chain is Paraclostridial mosquitocidal protein 1 from Paraclostridium bifermentans (Clostridium bifermentans).